Reading from the N-terminus, the 1530-residue chain is Regulating synaptic membrane exocytosis protein 2 (1530 aa).

A disordered region spans residues 1–34 (MSAPLGPRGRPAPTPAASQPPPQPEMPDLSHLTE). A compositionally biased stretch (pro residues) spans 10–25 (RPAPTPAASQPPPQPE). One can recognise a RabBD domain in the interval 26 to 194 (MPDLSHLTEE…TKSGAWFYNS (169 aa)). Residues 126–182 (KGDAPTCGICHKTKFADGCGHNCSYCQTKFCARCGGRVSLRSNKVMWVCNLCRKQQE) form an FYVE-type zinc finger. Cysteine 132, cysteine 135, cysteine 148, cysteine 151, cysteine 156, cysteine 159, cysteine 174, and cysteine 177 together coordinate Zn(2+). Disordered stretches follow at residues 195–608 (GSNT…ERQK) and 632–655 (SGVDTCSSTTLNEEHSHSDKHPVT). Basic and acidic residues-rich tracts occupy residues 210-225 (LRNEEAPQEKKAKLHE), 327-338 (EPGHLNYRDSNR), 357-375 (RDEYERQRREEEYQARYRS), 391-410 (EQMRIHAEVSRARHERRHSD), and 419-443 (EDSRISLLRMDRPSRQRSVSERRAA). Position 409 is a phosphoserine (serine 409). Positions 458–472 (AQGQSSYPQRTSNHS) are enriched in polar residues. The segment covering 484 to 501 (DRPDMRRADSLRKQHHLD) has biased composition (basic and acidic residues). Residues 519–530 (RNDSLSSDQSES) show a composition bias toward polar residues. Residues 537 to 546 (RPHKSKKGGK) show a composition bias toward basic residues. A compositionally biased stretch (acidic residues) spans 567–577 (SCDDVELESES). 2 stretches are compositionally biased toward basic and acidic residues: residues 578-592 (VSEKGDSQKGKRKTS) and 643-653 (NEEHSHSDKHP). Residues 677–763 (DGSVPRDSGA…EPQVELVVSR (87 aa)) enclose the PDZ domain. Threonine 698 carries the post-translational modification Phosphothreonine. A disordered region spans residues 771–802 (IPDSTHAQLESSSSSFESQKMDRPSISVTSPM). Residues serine 800 and serine 803 each carry the phosphoserine modification. Residues 814 to 937 (LSGQLSIKLW…ALLDDEPHWY (124 aa)) form the C2 1 domain. 6 disordered regions span residues 948–982 (PLPRPSPYLPRRQLHGESPTRRLQRSKRISDSEVS), 1003–1122 (LQSS…ERSA), 1130–1149 (RQMKLNKYKQVAGSDPRLEQ), 1154–1187 (KYRSGWDPHRGADTVSTKSSDSDVSDVSAVSRTS), 1242–1263 (SLEKNDGSQSDTAVGALGTSGK), and 1282–1307 (KSRSASQLSQTEGGGKKLRSTVQRST). The span at 1003 to 1024 (LQSSTLSVPEQVMSSNHCSPSG) shows a compositional bias: polar residues. The segment covering 1067–1086 (RMDRHRVMDDHYSSDRDRSH) has biased composition (basic and acidic residues). The segment covering 1088 to 1101 (RTGSVQTSPSSTPG) has biased composition (polar residues). The residue at position 1095 (serine 1095) is a Phosphoserine. Basic and acidic residues predominate over residues 1154 to 1165 (KYRSGWDPHRGA). Phosphoserine is present on serine 1175. A compositionally biased stretch (low complexity) spans 1178–1187 (SDVSAVSRTS). Phosphoserine is present on serine 1251. The C2 2 domain maps to 1376-1494 (AMGDIQVGMM…ELSNMVIGWF (119 aa)). Serine 1515 and serine 1518 each carry phosphoserine.

In terms of assembly, interacts with TSPOAP1 and RIMBP2. Interacts with PPFIA3 and PPFIA4. Interacts via its zinc finger with the first C2 domain of UNC13A. Forms a complex consisting of UNC13A, RIMS2 and RAB3A. Heterodimer with PCLO. Part of a ternary complex involving PCLO and EPAC2. Interacts with RAB3A and RAB3B that have been activated by GTP-binding. Interacts with RAB3C, RAB3D and RAB26. As to expression, detected in testis, pituitary and an insulinoma cell line. Detected at low levels in cerebellar cortex.

The protein resides in the synapse. It localises to the synaptosome. In terms of biological role, rab effector involved in exocytosis. May act as scaffold protein. Plays a role in dendrite formation by melanocytes. The sequence is that of Regulating synaptic membrane exocytosis protein 2 (Rims2) from Mus musculus (Mouse).